The sequence spans 396 residues: Deoxyuridine 5'-triphosphate nucleotidohydrolase (396 aa).

Residues 280–282 (RSS) and 380–381 (FG) contribute to the substrate site.

Belongs to the dUTPase family. Requires Mg(2+) as cofactor.

It catalyses the reaction dUTP + H2O = dUMP + diphosphate + H(+). Its function is as follows. Involved in nucleotide metabolism: produces dUMP, the immediate precursor of thymidine nucleotides and decreases the intracellular concentration of dUTP to avoid uracil incorporation into viral DNA. This Varicella-zoster virus (strain Dumas) (HHV-3) protein is Deoxyuridine 5'-triphosphate nucleotidohydrolase.